The chain runs to 227 residues: Endo-1,4-beta-xylanase 11A (227 aa).

The signal sequence occupies residues M1–R36. The region spanning A37–S227 is the GH11 domain. The tract at residues V112–S136 is necrosis inducing domain. E122 acts as the Nucleophile in catalysis. Residue E214 is the Proton donor of the active site.

The protein belongs to the glycosyl hydrolase 11 (cellulase G) family.

The protein resides in the secreted. It catalyses the reaction Endohydrolysis of (1-&gt;4)-beta-D-xylosidic linkages in xylans.. Its pathway is glycan degradation; xylan degradation. Its activity is regulated as follows. Significantly inhibited by the wheat xylanase inhibiting protein I (XIP-I) and the proteinaceous endoxylanase Triticum aestivum xylanase inhibitors I (TAXI-I), whereas no inhibition is detected with TAXI-II. In terms of biological role, endo-1,4-beta-xylanase involved in the hydrolysis of xylan, a major structural heterogeneous polysaccharide found in plant biomass representing the second most abundant polysaccharide in the biosphere, after cellulose. Required for plant infection and the appearance of secondary lesions. Is able to induce necrosis on leaves, seedling growth inhibition, induction of a ROS burst, electrolyte leakage, cytoplasm shrinkage, autofluorescence, cell death, and induction of defense genes, and this abilities are independent of the catalytic activity. Only exhibits elicitor activity in certain plants such as tomato, but not in N.benthamiana. The chain is Endo-1,4-beta-xylanase 11A from Botryotinia fuckeliana (strain B05.10) (Noble rot fungus).